The sequence spans 408 residues: Glutamate N-acetyltransferase (408 aa).

Thr150, Lys176, Thr189, Glu271, Asn403, and Thr408 together coordinate substrate. The active-site Nucleophile is the Thr189.

Belongs to the ArgJ family. Heterotetramer of two alpha and two beta chains.

It localises to the cytoplasm. The enzyme catalyses N(2)-acetyl-L-ornithine + L-glutamate = N-acetyl-L-glutamate + L-ornithine. The protein operates within amino-acid biosynthesis; L-arginine biosynthesis; L-ornithine and N-acetyl-L-glutamate from L-glutamate and N(2)-acetyl-L-ornithine (cyclic): step 1/1. Functionally, catalyzes the transfer of the acetyl group from N(2)-acetylornithine to glutamate, forming N-acetylglutamate and L-ornithine. This is Glutamate N-acetyltransferase from Methanococcus maripaludis (strain C5 / ATCC BAA-1333).